The primary structure comprises 125 residues: Hydrogenase maturation factor HypA (125 aa).

Position 2 (H2) interacts with Ni(2+). C73, C76, C96, and C99 together coordinate Zn(2+).

It belongs to the HypA/HybF family.

Its function is as follows. Involved in the maturation of [NiFe] hydrogenases. Required for nickel insertion into the metal center of the hydrogenase. This Methanobrevibacter smithii (strain ATCC 35061 / DSM 861 / OCM 144 / PS) protein is Hydrogenase maturation factor HypA.